An 81-amino-acid chain; its full sequence is uncharacterized protein (81 aa).

Residues 1 to 16 (MNRLTFYGLCLSGAVG) form the signal peptide. Positions 55 to 81 (TIDPHHNHHDDHHDSHGHGHGKIKGHH) are disordered. Residues 57–71 (DPHHNHHDDHHDSHG) are compositionally biased toward basic and acidic residues. Basic residues predominate over residues 72-81 (HGHGKIKGHH).

The protein localises to the secreted. This is an uncharacterized protein from Dictyostelium discoideum (Social amoeba).